Consider the following 189-residue polypeptide: UPF0301 protein bbp_491 (189 aa).

It belongs to the UPF0301 (AlgH) family.

The protein is UPF0301 protein bbp_491 of Buchnera aphidicola subsp. Baizongia pistaciae (strain Bp).